Here is a 539-residue protein sequence, read N- to C-terminus: GMP synthase [glutamine-hydrolyzing] (539 aa).

Residues 4 to 202 (KILILDFGSQ…VLGIAGCKPD (199 aa)) enclose the Glutamine amidotransferase type-1 domain. The Nucleophile role is filled by Cys-81. Catalysis depends on residues His-176 and Glu-178. The GMPS ATP-PPase domain maps to 203–395 (WVMRDHIEEA…LGLPPEMVYR (193 aa)). 230-236 (SGGVDSS) is a binding site for ATP.

As to quaternary structure, homodimer.

The catalysed reaction is XMP + L-glutamine + ATP + H2O = GMP + L-glutamate + AMP + diphosphate + 2 H(+). It functions in the pathway purine metabolism; GMP biosynthesis; GMP from XMP (L-Gln route): step 1/1. Catalyzes the synthesis of GMP from XMP. The sequence is that of GMP synthase [glutamine-hydrolyzing] from Cupriavidus necator (strain ATCC 17699 / DSM 428 / KCTC 22496 / NCIMB 10442 / H16 / Stanier 337) (Ralstonia eutropha).